The primary structure comprises 711 residues: Polyribonucleotide nucleotidyltransferase (711 aa).

Residues aspartate 490 and aspartate 496 each coordinate Mg(2+). In terms of domain architecture, KH spans 556–615; it reads PRIETMQVPTDKIREVIGSGGKVIREIVEVSGAKVDINDDGVIKIASANGEAIQKAYDMI. In terms of domain architecture, S1 motif spans 625–693; it reads GAVYTGKVVK…DRGKVRLSMK (69 aa).

This sequence belongs to the polyribonucleotide nucleotidyltransferase family. Requires Mg(2+) as cofactor.

It is found in the cytoplasm. The enzyme catalyses RNA(n+1) + phosphate = RNA(n) + a ribonucleoside 5'-diphosphate. Involved in mRNA degradation. Catalyzes the phosphorolysis of single-stranded polyribonucleotides processively in the 3'- to 5'-direction. The protein is Polyribonucleotide nucleotidyltransferase of Ruegeria sp. (strain TM1040) (Silicibacter sp.).